The primary structure comprises 661 residues: FAST kinase domain-containing protein 3, mitochondrial (661 aa).

In terms of domain architecture, RAP spans 592 to 650 (VALCIDGPQRFCLDSKHLLGKEATKQRHLRLLGYQVVQLPYHELELLTSRLELVDYLQR).

This sequence belongs to the FAST kinase family. As to expression, expression detected in spleen, testis, colon, heart, smooth muscle, kidney, brain, lung, liver, brown and white adipose tissue with highest expression in testis and smooth muscle.

Its subcellular location is the mitochondrion. Its function is as follows. Required for normal mitochondrial respiration. Increases steady-state levels and half-lives of a subset of mature mitochondrial mRNAs MT-ND2, MT-ND3, MT-CYTB, MT-CO2, and MT-ATP8/6. Promotes MT-CO1 mRNA translation and increases mitochondrial complex IV assembly and activity. The polypeptide is FAST kinase domain-containing protein 3, mitochondrial (Fastkd3) (Mus musculus (Mouse)).